Here is a 137-residue protein sequence, read N- to C-terminus: Small ribosomal subunit protein uS12 (137 aa).

Residues 1–25 (MPTINQLVRQGRKSKTYKSDSPALS) form a disordered region. A 3-methylthioaspartic acid modification is found at D102.

This sequence belongs to the universal ribosomal protein uS12 family. Part of the 30S ribosomal subunit. Contacts proteins S8 and S17. May interact with IF1 in the 30S initiation complex.

With S4 and S5 plays an important role in translational accuracy. Its function is as follows. Interacts with and stabilizes bases of the 16S rRNA that are involved in tRNA selection in the A site and with the mRNA backbone. Located at the interface of the 30S and 50S subunits, it traverses the body of the 30S subunit contacting proteins on the other side and probably holding the rRNA structure together. The combined cluster of proteins S8, S12 and S17 appears to hold together the shoulder and platform of the 30S subunit. This Finegoldia magna (strain ATCC 29328 / DSM 20472 / WAL 2508) (Peptostreptococcus magnus) protein is Small ribosomal subunit protein uS12.